Reading from the N-terminus, the 489-residue chain is 5'-AMP-activated protein kinase subunit gamma-3 (489 aa).

Residues M1–G113 form a disordered region. The segment covering S34 to S46 has biased composition (low complexity). Residues R50 to R62 are compositionally biased toward basic residues. CBS domains are found at residues M197–L258, C280–R340, and T355–M415. Residues R225, M240–D245, V285, H306–R307, and K325 each bind ADP. AMP is bound by residues R225, M240–D245, V285, H306, H306–R307, K325, T355, A360, S381–A382, S397–D400, R424, L432, H453, H453–R454, and S469–D472. ATP is bound by residues R225, M240–D245, V285, H306–R307, R307, and K325. The AMPK pseudosubstrate signature appears at L293–V314. Residues S397–D400, R424, L432, and H453–R454 contribute to the ADP site. ATP contacts are provided by residues S397–D400, R424, L432, and H453–R454. Positions C427–A486 constitute a CBS 4 domain.

This sequence belongs to the 5'-AMP-activated protein kinase gamma subunit family. As to quaternary structure, AMPK is a heterotrimer of an alpha catalytic subunit (PRKAA1 or PRKAA2), a beta (PRKAB1 or PRKAB2) and a gamma non-catalytic subunits (PRKAG1, PRKAG2 or PRKAG3). Interacts with FNIP1 and FNIP2. Post-translationally, phosphorylated by ULK1; leading to negatively regulate AMPK activity and suggesting the existence of a regulatory feedback loop between ULK1 and AMPK. Glycosylated; O-GlcNAcylated by OGT, promoting the AMP-activated protein kinase (AMPK) activity. As to expression, skeletal muscle, with weak expression in heart and pancreas.

Functionally, AMP/ATP-binding subunit of AMP-activated protein kinase (AMPK), an energy sensor protein kinase that plays a key role in regulating cellular energy metabolism. In response to reduction of intracellular ATP levels, AMPK activates energy-producing pathways and inhibits energy-consuming processes: inhibits protein, carbohydrate and lipid biosynthesis, as well as cell growth and proliferation. AMPK acts via direct phosphorylation of metabolic enzymes, and by longer-term effects via phosphorylation of transcription regulators. AMPK also acts as a regulator of cellular polarity by remodeling the actin cytoskeleton; probably by indirectly activating myosin. The AMPK gamma3 subunit is a non-catalytic subunit with a regulatory role in muscle energy metabolism. It mediates binding to AMP, ADP and ATP, leading to AMPK activation or inhibition: AMP-binding results in allosteric activation of alpha catalytic subunit (PRKAA1 or PRKAA2) both by inducing phosphorylation and preventing dephosphorylation of catalytic subunits. ADP also stimulates phosphorylation, without stimulating already phosphorylated catalytic subunit. ATP promotes dephosphorylation of catalytic subunit, rendering the AMPK enzyme inactive. This is 5'-AMP-activated protein kinase subunit gamma-3 (PRKAG3) from Homo sapiens (Human).